We begin with the raw amino-acid sequence, 212 residues long: Thymidylate kinase (212 aa).

The residue at position 2 (Ala-2) is an N-acetylalanine. ATP-binding positions include 16–21 (RAGKTT) and Arg-97. The tract at residues 133-157 (LQLQLLDAAARGEFGLERYETGTFQ) is LID. Residues Lys-182 and Arg-192 each contribute to the ATP site.

It belongs to the thymidylate kinase family. Homodimer. It depends on Mg(2+) as a cofactor.

The catalysed reaction is dTMP + ATP = dTDP + ADP. It participates in pyrimidine metabolism; dTTP biosynthesis. Functionally, catalyzes the phosphorylation of thymidine monophosphate (dTMP) to thymidine diphosphate (dTDP), the immediate precursor for the DNA building block dTTP, with ATP as the preferred phosphoryl donor in the presence of Mg(2+). The chain is Thymidylate kinase (Dtymk) from Mus musculus (Mouse).